We begin with the raw amino-acid sequence, 657 residues long: Glycogen debranching enzyme (657 aa).

Aspartate 336 acts as the Nucleophile in catalysis. Glutamate 371 acts as the Proton donor in catalysis. The disordered stretch occupies residues 460–479; it reads ANGEENRDGTNNNYSNNHGK.

This sequence belongs to the glycosyl hydrolase 13 family.

The catalysed reaction is Hydrolysis of (1-&gt;6)-alpha-D-glucosidic linkages to branches with degrees of polymerization of three or four glucose residues in limit dextrin.. The protein operates within glycan degradation; glycogen degradation. In terms of biological role, removes maltotriose and maltotetraose chains that are attached by 1,6-alpha-linkage to the limit dextrin main chain, generating a debranched limit dextrin. This chain is Glycogen debranching enzyme, found in Escherichia coli O17:K52:H18 (strain UMN026 / ExPEC).